We begin with the raw amino-acid sequence, 301 residues long: Ribosomal RNA small subunit methyltransferase A (301 aa).

The S-adenosyl-L-methionine site is built by Asn23, Ile25, Gly50, Glu72, Asp97, and Asn149.

This sequence belongs to the class I-like SAM-binding methyltransferase superfamily. rRNA adenine N(6)-methyltransferase family. RsmA subfamily.

It localises to the cytoplasm. The catalysed reaction is adenosine(1518)/adenosine(1519) in 16S rRNA + 4 S-adenosyl-L-methionine = N(6)-dimethyladenosine(1518)/N(6)-dimethyladenosine(1519) in 16S rRNA + 4 S-adenosyl-L-homocysteine + 4 H(+). In terms of biological role, specifically dimethylates two adjacent adenosines (A1518 and A1519) in the loop of a conserved hairpin near the 3'-end of 16S rRNA in the 30S particle. May play a critical role in biogenesis of 30S subunits. The polypeptide is Ribosomal RNA small subunit methyltransferase A (Rickettsia conorii (strain ATCC VR-613 / Malish 7)).